Here is a 121-residue protein sequence, read N- to C-terminus: Large ribosomal subunit protein bL12 (121 aa).

Belongs to the bacterial ribosomal protein bL12 family. Homodimer. Part of the ribosomal stalk of the 50S ribosomal subunit. Forms a multimeric L10(L12)X complex, where L10 forms an elongated spine to which 2 to 4 L12 dimers bind in a sequential fashion. Binds GTP-bound translation factors.

In terms of biological role, forms part of the ribosomal stalk which helps the ribosome interact with GTP-bound translation factors. Is thus essential for accurate translation. This Xanthomonas campestris pv. campestris (strain B100) protein is Large ribosomal subunit protein bL12.